Reading from the N-terminus, the 244-residue chain is 5-oxoprolinase subunit A (244 aa).

Belongs to the LamB/PxpA family. In terms of assembly, forms a complex composed of PxpA, PxpB and PxpC.

It catalyses the reaction 5-oxo-L-proline + ATP + 2 H2O = L-glutamate + ADP + phosphate + H(+). Functionally, catalyzes the cleavage of 5-oxoproline to form L-glutamate coupled to the hydrolysis of ATP to ADP and inorganic phosphate. The polypeptide is 5-oxoprolinase subunit A (Escherichia coli (strain SE11)).